The primary structure comprises 327 residues: Beta-ketoacyl-[acyl-carrier-protein] synthase III (327 aa).

Active-site residues include Cys112 and His253. The interval 254–258 (QANER) is ACP-binding. The active site involves Asn283.

It belongs to the thiolase-like superfamily. FabH family. Homodimer.

It is found in the cytoplasm. The enzyme catalyses malonyl-[ACP] + acetyl-CoA + H(+) = 3-oxobutanoyl-[ACP] + CO2 + CoA. Its pathway is lipid metabolism; fatty acid biosynthesis. Functionally, catalyzes the condensation reaction of fatty acid synthesis by the addition to an acyl acceptor of two carbons from malonyl-ACP. Catalyzes the first condensation reaction which initiates fatty acid synthesis and may therefore play a role in governing the total rate of fatty acid production. Possesses both acetoacetyl-ACP synthase and acetyl transacylase activities. Its substrate specificity determines the biosynthesis of branched-chain and/or straight-chain of fatty acids. The chain is Beta-ketoacyl-[acyl-carrier-protein] synthase III from Chlamydia trachomatis serovar A (strain ATCC VR-571B / DSM 19440 / HAR-13).